The chain runs to 553 residues: Meiotic expression up-regulated protein 18 (553 aa).

Residues 267-305 (SNETLCSNDSKHRIARLKNEDNTQKPISKKRKSKKASHK) are disordered. Over residues 275–289 (DSKHRIARLKNEDNT) the composition is skewed to basic and acidic residues. Residues 293-304 (ISKKRKSKKASH) are compositionally biased toward basic residues.

This is Meiotic expression up-regulated protein 18 (meu18) from Schizosaccharomyces pombe (strain 972 / ATCC 24843) (Fission yeast).